Consider the following 457-residue polypeptide: NADP-specific glutamate dehydrogenase (457 aa).

K113 is a catalytic residue.

It belongs to the Glu/Leu/Phe/Val dehydrogenases family. As to quaternary structure, homohexamer.

It catalyses the reaction L-glutamate + NADP(+) + H2O = 2-oxoglutarate + NH4(+) + NADPH + H(+). This chain is NADP-specific glutamate dehydrogenase (GDH), found in Tuber borchii (White truffle).